The primary structure comprises 285 residues: Ribonuclease Z (285 aa).

Residues His-61, His-63, Asp-65, His-66, His-152, Asp-175, and His-239 each contribute to the Zn(2+) site. Asp-65 acts as the Proton acceptor in catalysis.

The protein belongs to the RNase Z family. Homodimer. Requires Zn(2+) as cofactor.

The enzyme catalyses Endonucleolytic cleavage of RNA, removing extra 3' nucleotides from tRNA precursor, generating 3' termini of tRNAs. A 3'-hydroxy group is left at the tRNA terminus and a 5'-phosphoryl group is left at the trailer molecule.. Functionally, zinc phosphodiesterase, which displays some tRNA 3'-processing endonuclease activity. Probably involved in tRNA maturation, by removing a 3'-trailer from precursor tRNA. This Mycobacterium sp. (strain JLS) protein is Ribonuclease Z.